The sequence spans 314 residues: Coiled-coil domain-containing protein 42 like-2 (314 aa).

Coiled coils occupy residues 34 to 139 (RLLE…RQEK) and 175 to 233 (NKLL…WESR).

The protein belongs to the CFAP73 family.

This is Coiled-coil domain-containing protein 42 like-2 from Xenopus laevis (African clawed frog).